A 202-amino-acid polypeptide reads, in one-letter code: ATP-dependent Clp protease proteolytic subunit (202 aa).

Catalysis depends on Ser-106, which acts as the Nucleophile. His-131 is a catalytic residue.

It belongs to the peptidase S14 family. Fourteen ClpP subunits assemble into 2 heptameric rings which stack back to back to give a disk-like structure with a central cavity, resembling the structure of eukaryotic proteasomes.

Its subcellular location is the cytoplasm. The enzyme catalyses Hydrolysis of proteins to small peptides in the presence of ATP and magnesium. alpha-casein is the usual test substrate. In the absence of ATP, only oligopeptides shorter than five residues are hydrolyzed (such as succinyl-Leu-Tyr-|-NHMec, and Leu-Tyr-Leu-|-Tyr-Trp, in which cleavage of the -Tyr-|-Leu- and -Tyr-|-Trp bonds also occurs).. In terms of biological role, cleaves peptides in various proteins in a process that requires ATP hydrolysis. Has a chymotrypsin-like activity. Plays a major role in the degradation of misfolded proteins. The protein is ATP-dependent Clp protease proteolytic subunit of Acidovorax sp. (strain JS42).